Reading from the N-terminus, the 318-residue chain is Ribose-phosphate pyrophosphokinase (318 aa).

Residues 46–48 (DGE) and 105–106 (RQ) each bind ATP. Mg(2+)-binding residues include histidine 139 and aspartate 178. Lysine 201 is an active-site residue. Residues arginine 203, aspartate 227, and 231–235 (DTAGT) each bind D-ribose 5-phosphate.

It belongs to the ribose-phosphate pyrophosphokinase family. Class I subfamily. As to quaternary structure, homohexamer. It depends on Mg(2+) as a cofactor.

It localises to the cytoplasm. The enzyme catalyses D-ribose 5-phosphate + ATP = 5-phospho-alpha-D-ribose 1-diphosphate + AMP + H(+). Its pathway is metabolic intermediate biosynthesis; 5-phospho-alpha-D-ribose 1-diphosphate biosynthesis; 5-phospho-alpha-D-ribose 1-diphosphate from D-ribose 5-phosphate (route I): step 1/1. Involved in the biosynthesis of the central metabolite phospho-alpha-D-ribosyl-1-pyrophosphate (PRPP) via the transfer of pyrophosphoryl group from ATP to 1-hydroxyl of ribose-5-phosphate (Rib-5-P). This chain is Ribose-phosphate pyrophosphokinase, found in Helicobacter pylori (strain ATCC 700392 / 26695) (Campylobacter pylori).